The following is a 175-amino-acid chain: Crossover junction endodeoxyribonuclease RuvC (175 aa).

Residues D8, E69, and D141 contribute to the active site. Residues D8, E69, and D141 each coordinate Mg(2+).

It belongs to the RuvC family. In terms of assembly, homodimer which binds Holliday junction (HJ) DNA. The HJ becomes 2-fold symmetrical on binding to RuvC with unstacked arms; it has a different conformation from HJ DNA in complex with RuvA. In the full resolvosome a probable DNA-RuvA(4)-RuvB(12)-RuvC(2) complex forms which resolves the HJ. Mg(2+) is required as a cofactor.

It is found in the cytoplasm. It carries out the reaction Endonucleolytic cleavage at a junction such as a reciprocal single-stranded crossover between two homologous DNA duplexes (Holliday junction).. The RuvA-RuvB-RuvC complex processes Holliday junction (HJ) DNA during genetic recombination and DNA repair. Endonuclease that resolves HJ intermediates. Cleaves cruciform DNA by making single-stranded nicks across the HJ at symmetrical positions within the homologous arms, yielding a 5'-phosphate and a 3'-hydroxyl group; requires a central core of homology in the junction. The consensus cleavage sequence is 5'-(A/T)TT(C/G)-3'. Cleavage occurs on the 3'-side of the TT dinucleotide at the point of strand exchange. HJ branch migration catalyzed by RuvA-RuvB allows RuvC to scan DNA until it finds its consensus sequence, where it cleaves and resolves the cruciform DNA. The sequence is that of Crossover junction endodeoxyribonuclease RuvC from Colwellia psychrerythraea (strain 34H / ATCC BAA-681) (Vibrio psychroerythus).